Here is a 124-residue protein sequence, read N- to C-terminus: Replication restart protein PriB (124 aa).

In terms of domain architecture, SSB spans 12 to 112 (IDNCLILSGS…VHAEHIEFID (101 aa)).

Belongs to the PriB family. Homodimer. Interacts with PriA and DnaT. Component of the replication restart primosome. Primosome assembly occurs via a 'hand-off' mechanism. PriA binds to replication forks, subsequently PriB then DnaT bind; DnaT then displaces ssDNA to generate the helicase loading substrate.

Functionally, involved in the restart of stalled replication forks, which reloads the replicative helicase on sites other than the origin of replication; the PriA-PriB pathway is the major replication restart pathway. During primosome assembly it facilitates complex formation between PriA and DnaT on DNA; stabilizes PriA on DNA. Stimulates the DNA unwinding activity of PriA helicase. The chain is Replication restart protein PriB from Actinobacillus pleuropneumoniae serotype 5b (strain L20).